Reading from the N-terminus, the 195-residue chain is Ribonuclease HII (195 aa).

The region spanning 6–195 is the RNase H type-2 domain; it reads SLIAGVDEVG…KSFISRLKKN (190 aa). The a divalent metal cation site is built by D12, E13, and D108.

The protein belongs to the RNase HII family. It depends on Mn(2+) as a cofactor. Mg(2+) is required as a cofactor.

It localises to the cytoplasm. It carries out the reaction Endonucleolytic cleavage to 5'-phosphomonoester.. In terms of biological role, endonuclease that specifically degrades the RNA of RNA-DNA hybrids. This chain is Ribonuclease HII, found in Prochlorococcus marinus (strain NATL2A).